A 235-amino-acid polypeptide reads, in one-letter code: Probable RNA 2'-phosphotransferase (235 aa).

The protein belongs to the KptA/TPT1 family.

In terms of biological role, removes the 2'-phosphate from RNA via an intermediate in which the phosphate is ADP-ribosylated by NAD followed by a presumed transesterification to release the RNA and generate ADP-ribose 1''-2''-cyclic phosphate (APPR&gt;P). May function as an ADP-ribosylase. This Thermoplasma volcanium (strain ATCC 51530 / DSM 4299 / JCM 9571 / NBRC 15438 / GSS1) protein is Probable RNA 2'-phosphotransferase.